Reading from the N-terminus, the 208-residue chain is Protein disulfide-isomerase A3 (208 aa).

Residues 1–44 form the Thioredoxin 1 domain; sequence RLAPEYEAAATRYGVSGYPTLKDGEEAGAYDGPRTADGIVSHLK. N6-succinyllysine is present on K44. K49 is subject to N6-acetyllysine. T133 carries the post-translational modification Phosphothreonine. Residues 151–208 form the Thioredoxin 2 domain; sequence SRFLQDYFDGNLKRYLKSEPIPETNDGPVKMDATANDVPSPYEVKGFPTIYFSPANKK. K163 is modified (N6-acetyllysine).

Belongs to the protein disulfide isomerase family. As to quaternary structure, part of the major histocompatibility complex class I (MHC I) peptide loading complex composed of TAP1, TAP2, B2M, MHC heavy chain, TAPBP, PDIA3, and CALR. Interacts with ERP27 and CANX. Interacts with SERPINA2 and SERPINA1. Interacts with ATP2A2. In terms of processing, within the major histocompatibility complex class I (MHC I) peptide loading complex forms reversible disulfide-linked heterodimers with TAPBP as part of its protein folding chaperone activity. This is essential to assist the dynamic assembly of the MHC I complex with high affinity antigens in the endoplasmic reticulum. Phosphorylated. As to expression, in the caput epididymal spermatozoa, detected in the mid-peice and at low levels in the principal piece. In the cauda epididymal spermatozoa, detected at very low levels in the principal piece and not in the mid-piece (at protein level).

The protein resides in the endoplasmic reticulum. It is found in the endoplasmic reticulum lumen. Its subcellular location is the melanosome. It catalyses the reaction Catalyzes the rearrangement of -S-S- bonds in proteins.. Its function is as follows. Protein disulfide isomerase that catalyzes the formation, isomerization, and reduction or oxidation of disulfide bonds in client proteins and functions as a protein folding chaperone. Core component of the major histocompatibility complex class I (MHC I) peptide loading complex where it functions as an essential folding chaperone for TAPBP. Through TAPBP, assists the dynamic assembly of the MHC I complex with high affinity antigens in the endoplasmic reticulum. Therefore, plays a crucial role in the presentation of antigens to cytotoxic T cells in adaptive immunity. This chain is Protein disulfide-isomerase A3, found in Mesocricetus auratus (Golden hamster).